The following is a 1159-amino-acid chain: RNA-directed RNA polymerase (1159 aa).

One can recognise a RdRp catalytic domain in the interval 545–727 (LTYGVLAEDT…KALASYTGLE (183 aa)).

This sequence belongs to the reoviridae RNA-directed RNA polymerase family. In terms of assembly, interacts with VP3 (Potential). Interacts with VP2 (Potential). Interacts with NSP5; this interaction is probably necessary for the formation of functional virus factories.

It is found in the virion. The catalysed reaction is RNA(n) + a ribonucleoside 5'-triphosphate = RNA(n+1) + diphosphate. In terms of biological role, RNA-directed RNA polymerase that is involved in both transcription and genome replication. Together with VP3 capping enzyme, forms an enzyme complex positioned near the channels situated at each of the five-fold vertices of the core. Following infection, the outermost layer of the virus is lost, leaving a double-layered particle (DLP) made up of the core and VP6 shell. VP1 then catalyzes the transcription of fully conservative plus-strand genomic RNAs that are extruded through the DLP's channels into the cytoplasm where they function as mRNAs for translation of viral proteins. One copy of each of the viral (+)RNAs is also recruited during core assembly, together with newly synthesized polymerase complexes and VP2. The polymerase of these novo-formed particles catalyzes the synthesis of complementary minus-strands leading to dsDNA formation. To do so, the polymerase specifically recognizes conserved 3' sequence(s) in plus-strand RNA templates. Once dsRNA synthesis is complete, the polymerase switches to the transcriptional mode, thus providing secondary transcription. This is RNA-directed RNA polymerase from Homo sapiens (Human).